The primary structure comprises 247 residues: Probable transcriptional regulatory protein plu2109 (247 aa).

It belongs to the TACO1 family.

The protein localises to the cytoplasm. The polypeptide is Probable transcriptional regulatory protein plu2109 (Photorhabdus laumondii subsp. laumondii (strain DSM 15139 / CIP 105565 / TT01) (Photorhabdus luminescens subsp. laumondii)).